Consider the following 198-residue polypeptide: Recombination protein RecR (198 aa).

The C4-type zinc finger occupies 57 to 72; that stretch reads CSVCGHITDQDPCYIC. The Toprim domain occupies 80-175; it reads SVICVVQDPK…KLSRIAHGLP (96 aa).

It belongs to the RecR family.

Functionally, may play a role in DNA repair. It seems to be involved in an RecBC-independent recombinational process of DNA repair. It may act with RecF and RecO. This chain is Recombination protein RecR, found in Bacillus subtilis (strain 168).